We begin with the raw amino-acid sequence, 181 residues long: Isopentenyl-diphosphate Delta-isomerase (181 aa).

Positions 25 and 32 each coordinate Mn(2+). Positions proline 30–methionine 164 constitute a Nudix hydrolase domain. Residue cysteine 67 is part of the active site. Histidine 69 lines the Mn(2+) pocket. Glutamate 87 is a binding site for Mg(2+). Positions 114 and 116 each coordinate Mn(2+). The active site involves glutamate 116.

The protein belongs to the IPP isomerase type 1 family. Homodimer. Mg(2+) serves as cofactor. Requires Mn(2+) as cofactor.

It is found in the cytoplasm. It catalyses the reaction isopentenyl diphosphate = dimethylallyl diphosphate. The protein operates within isoprenoid biosynthesis; dimethylallyl diphosphate biosynthesis; dimethylallyl diphosphate from isopentenyl diphosphate: step 1/1. Functionally, catalyzes the 1,3-allylic rearrangement of the homoallylic substrate isopentenyl (IPP) to its highly electrophilic allylic isomer, dimethylallyl diphosphate (DMAPP). The polypeptide is Isopentenyl-diphosphate Delta-isomerase (Salmonella agona (strain SL483)).